The sequence spans 494 residues: Acetyl-coenzyme A carboxylase carboxyl transferase subunit beta, chloroplastic (494 aa).

Residues 230-494 form the CoA carboxyltransferase N-terminal domain; sequence LWVQCENCYG…LHGFFPLNQN (265 aa). Positions 234, 237, 253, and 256 each coordinate Zn(2+). A C4-type zinc finger spans residues 234–256; it reads CENCYGLNYKKFFRSKMNICEQC.

This sequence belongs to the AccD/PCCB family. In terms of assembly, acetyl-CoA carboxylase is a heterohexamer composed of biotin carboxyl carrier protein, biotin carboxylase and 2 subunits each of ACCase subunit alpha and ACCase plastid-coded subunit beta (accD). Zn(2+) serves as cofactor.

The protein resides in the plastid. The protein localises to the chloroplast stroma. It carries out the reaction N(6)-carboxybiotinyl-L-lysyl-[protein] + acetyl-CoA = N(6)-biotinyl-L-lysyl-[protein] + malonyl-CoA. It participates in lipid metabolism; malonyl-CoA biosynthesis; malonyl-CoA from acetyl-CoA: step 1/1. Component of the acetyl coenzyme A carboxylase (ACC) complex. Biotin carboxylase (BC) catalyzes the carboxylation of biotin on its carrier protein (BCCP) and then the CO(2) group is transferred by the transcarboxylase to acetyl-CoA to form malonyl-CoA. This Drimys granadensis protein is Acetyl-coenzyme A carboxylase carboxyl transferase subunit beta, chloroplastic.